A 612-amino-acid polypeptide reads, in one-letter code: Chloride intracellular channel protein 6 (612 aa).

The interval 1 to 373 (MAEATEPKEV…NGPASEEGDL (373 aa)) is disordered. Positions 34 to 51 (LEGREASEGAAEAPRDLG) are enriched in basic and acidic residues. Ser-40 is modified (phosphoserine). A compositionally biased stretch (low complexity) spans 84–96 (PGTETPGTSGAPG). Positions 120–129 (QQVQGTSSGL) are enriched in polar residues. A compositionally biased stretch (basic and acidic residues) spans 140–153 (EDARREPEDPKASE). Residues 208–223 (SSPQPQDEAIEIAAAE) show a composition bias toward low complexity. 2 stretches are compositionally biased toward basic and acidic residues: residues 240-264 (AKGEGETLRKDGFEEAAPEEARVDS) and 275-303 (EEARVDSGENRDQGRLQEETGEEEARPES). Ser-264, Ser-303, and Ser-321 each carry phosphoserine. Basic and acidic residues-rich tracts occupy residues 325–335 (EEAKSTGHEES) and 354–364 (ELGRVNGRREN). A Phosphoserine modification is found at Ser-368. The G-site motif lies at 395 to 398 (CPFS). A helical transmembrane segment spans residues 397-417 (FSQRLFMILWLKGVIFNVTTV). A GST C-terminal domain is found at 441–612 (DGEVKTDVNK…AYSDAAKRMK (172 aa)).

The protein belongs to the chloride channel CLIC family. As to quaternary structure, monomer (soluble state). Interacts with dopamine receptors DRD2, DRD3 and DRD4. Post-translationally, phosphorylated. Predominantly expressed in brain, pituitary and stomach. In adult brain, it is restricted to the choroid plexus, the striatal proliferative subventricular zone and the cerebellum where it colocalizes with the D(3)R in the Purkinje cells of the lobules IX and X.

It localises to the cytoplasm. Its subcellular location is the cell membrane. The catalysed reaction is chloride(in) = chloride(out). Its activity is regulated as follows. Channel activity is redox- and pH-regulated. Inhibited by IAA-94. In the soluble state, catalyzes glutaredoxin-like thiol disulfide exchange reactions with reduced glutathione as electron donor. Can insert into membranes and form voltage-dependent chloride-selective channels. The channel opens upon membrane depolarization at positive voltages and closes at negative membrane voltages. May play a critical role in water-secreting cells, possibly through the regulation of chloride ion transport. In Rattus norvegicus (Rat), this protein is Chloride intracellular channel protein 6 (Clic6).